We begin with the raw amino-acid sequence, 264 residues long: 3-methyl-2-oxobutanoate hydroxymethyltransferase (264 aa).

D45 and D84 together coordinate Mg(2+). Residues 45–46 (DS), D84, and K112 contribute to the 3-methyl-2-oxobutanoate site. E114 serves as a coordination point for Mg(2+). Residue E181 is the Proton acceptor of the active site.

It belongs to the PanB family. Homodecamer; pentamer of dimers. Mg(2+) is required as a cofactor.

It is found in the cytoplasm. It carries out the reaction 3-methyl-2-oxobutanoate + (6R)-5,10-methylene-5,6,7,8-tetrahydrofolate + H2O = 2-dehydropantoate + (6S)-5,6,7,8-tetrahydrofolate. It participates in cofactor biosynthesis; (R)-pantothenate biosynthesis; (R)-pantoate from 3-methyl-2-oxobutanoate: step 1/2. Catalyzes the reversible reaction in which hydroxymethyl group from 5,10-methylenetetrahydrofolate is transferred onto alpha-ketoisovalerate to form ketopantoate. The sequence is that of 3-methyl-2-oxobutanoate hydroxymethyltransferase from Shigella sonnei (strain Ss046).